The chain runs to 118 residues: MSEQPHKQRTRTKRASLHEKQDQVRATLSEELREEYGQRNVRVNVGDTVEVMRGDDAGEDGEVTDVDLRDAEVFVEGVTVEAADGEETPRPVESSNLRVTDLDLDDDMRVERLEGDNE.

Residues 1–24 (MSEQPHKQRTRTKRASLHEKQDQV) are disordered.

The protein belongs to the universal ribosomal protein uL24 family. As to quaternary structure, part of the 50S ribosomal subunit.

One of two assembly initiator proteins, it binds directly to the 5'-end of the 23S rRNA, where it nucleates assembly of the 50S subunit. Its function is as follows. Located at the polypeptide exit tunnel on the outside of the subunit. This is Large ribosomal subunit protein uL24 from Halobacterium salinarum (strain ATCC 700922 / JCM 11081 / NRC-1) (Halobacterium halobium).